The sequence spans 119 residues: MCPECFFLMLCFCGYCSSSSSSFRSSPVYGFPGRPPGGAGCRERSQRSCLRPGGLPSLTQNPRLAATVPVAPPLSRRGLRSWHPGKTTPGCKAQRRFAHALSVVAAGPCSLPAGCHTPV.

A signal peptide spans 1-30; it reads MCPECFFLMLCFCGYCSSSSSSFRSSPVYG.

This is an uncharacterized protein from Escherichia coli (strain UTI89 / UPEC).